A 205-amino-acid polypeptide reads, in one-letter code: Outer-membrane lipoprotein carrier protein (205 aa).

An N-terminal signal peptide occupies residues 1 to 21 (MRFLAVATMVVALMVPWSVRA).

Belongs to the LolA family. In terms of assembly, monomer.

It is found in the periplasm. Functionally, participates in the translocation of lipoproteins from the inner membrane to the outer membrane. Only forms a complex with a lipoprotein if the residue after the N-terminal Cys is not an aspartate (The Asp acts as a targeting signal to indicate that the lipoprotein should stay in the inner membrane). The protein is Outer-membrane lipoprotein carrier protein of Methylobacillus flagellatus (strain ATCC 51484 / DSM 6875 / VKM B-1610 / KT).